The following is a 527-amino-acid chain: Probable bifunctional methylthioribulose-1-phosphate dehydratase/enolase-phosphatase E1 (527 aa).

Residues 1–244 form a methylthioribulose-1-phosphate dehydratase region; the sequence is MAAAAAPAVA…AIKLHQLGLD (244 aa). Position 116 (Cys-116) interacts with substrate. Zn(2+) contacts are provided by His-134 and His-136. The active-site Proton donor/acceptor; for methylthioribulose-1-phosphate dehydratase activity is the Glu-159. Zn(2+) is bound at residue His-209. An enolase-phosphatase E1 region spans residues 288 to 527; that stretch reads IVLDIEGTTT…FKTINSLSEI (240 aa). Mg(2+)-binding residues include Asp-291 and Glu-293. Residues 426 to 427 and Lys-460 each bind substrate; that span reads SS. Asp-486 is a binding site for Mg(2+).

It in the N-terminal section; belongs to the aldolase class II family. MtnB subfamily. In the C-terminal section; belongs to the HAD-like hydrolase superfamily. MasA/MtnC family. It depends on Zn(2+) as a cofactor. The cofactor is Mg(2+).

The enzyme catalyses 5-(methylsulfanyl)-D-ribulose 1-phosphate = 5-methylsulfanyl-2,3-dioxopentyl phosphate + H2O. The catalysed reaction is 5-methylsulfanyl-2,3-dioxopentyl phosphate + H2O = 1,2-dihydroxy-5-(methylsulfanyl)pent-1-en-3-one + phosphate. The protein operates within amino-acid biosynthesis; L-methionine biosynthesis via salvage pathway; L-methionine from S-methyl-5-thio-alpha-D-ribose 1-phosphate: step 2/6. It participates in amino-acid biosynthesis; L-methionine biosynthesis via salvage pathway; L-methionine from S-methyl-5-thio-alpha-D-ribose 1-phosphate: step 3/6. It functions in the pathway amino-acid biosynthesis; L-methionine biosynthesis via salvage pathway; L-methionine from S-methyl-5-thio-alpha-D-ribose 1-phosphate: step 4/6. The sequence is that of Probable bifunctional methylthioribulose-1-phosphate dehydratase/enolase-phosphatase E1 from Ricinus communis (Castor bean).